The chain runs to 437 residues: Nicotinate phosphoribosyltransferase (437 aa).

H231 is subject to Phosphohistidine; by autocatalysis.

This sequence belongs to the NAPRTase family. Post-translationally, transiently phosphorylated on a His residue during the reaction cycle. Phosphorylation strongly increases the affinity for substrates and increases the rate of nicotinate D-ribonucleotide production. Dephosphorylation regenerates the low-affinity form of the enzyme, leading to product release.

The catalysed reaction is nicotinate + 5-phospho-alpha-D-ribose 1-diphosphate + ATP + H2O = nicotinate beta-D-ribonucleotide + ADP + phosphate + diphosphate. Its pathway is cofactor biosynthesis; NAD(+) biosynthesis; nicotinate D-ribonucleotide from nicotinate: step 1/1. Its function is as follows. Catalyzes the synthesis of beta-nicotinate D-ribonucleotide from nicotinate and 5-phospho-D-ribose 1-phosphate at the expense of ATP. This chain is Nicotinate phosphoribosyltransferase, found in Vibrio vulnificus (strain CMCP6).